The sequence spans 186 residues: Glycerol-3-phosphate acyltransferase 1 (186 aa).

5 consecutive transmembrane segments (helical) span residues 9-29, 58-78, 85-105, 121-141, and 161-181; these read MQFL…AYIV, GYFV…VSIA, STFV…PVLF, IAFD…FYLI, and ILYS…VLIL.

It belongs to the PlsY family. In terms of assembly, probably interacts with PlsX.

It localises to the cell membrane. The catalysed reaction is an acyl phosphate + sn-glycerol 3-phosphate = a 1-acyl-sn-glycero-3-phosphate + phosphate. It functions in the pathway lipid metabolism; phospholipid metabolism. Its function is as follows. Catalyzes the transfer of an acyl group from acyl-phosphate (acyl-PO(4)) to glycerol-3-phosphate (G3P) to form lysophosphatidic acid (LPA). This enzyme utilizes acyl-phosphate as fatty acyl donor, but not acyl-CoA or acyl-ACP. The chain is Glycerol-3-phosphate acyltransferase 1 from Bacillus cereus (strain ZK / E33L).